The primary structure comprises 364 residues: Mannose-1-phosphate guanyltransferase (364 aa).

Belongs to the transferase hexapeptide repeat family.

It localises to the cytoplasm. The catalysed reaction is alpha-D-mannose 1-phosphate + GTP + H(+) = GDP-alpha-D-mannose + diphosphate. It participates in nucleotide-sugar biosynthesis; GDP-alpha-D-mannose biosynthesis; GDP-alpha-D-mannose from alpha-D-mannose 1-phosphate (GTP route): step 1/1. In terms of biological role, involved in cell wall synthesis where it is required for glycosylation. Involved in cell cycle progression through cell-size checkpoint. The chain is Mannose-1-phosphate guanyltransferase (mpg1) from Hypocrea jecorina (Trichoderma reesei).